The sequence spans 366 residues: G kinase-anchoring protein 1 (366 aa).

Residues 1–95 (MASAVLSSVL…SHSVCNVQHE (95 aa)) are interaction with IRS1. Residues 20–105 (QVDSGSGSDS…LSLPNPVQKE (86 aa)) form a disordered region. 3 positions are modified to phosphoserine: Ser23, Ser25, and Ser27. Residues 39–50 (NGKSQTLGNKST) show a composition bias toward polar residues. Residues 46-77 (GNKSTANEKKREKRRKKKEQQQSEANELRNLA) adopt a coiled-coil conformation. Phosphoserine; by PKG is present on Ser106. 3 coiled-coil regions span residues 129-160 (DLEKALLLSKLEYEEHRQDYENAENASTQTKV), 250-299 (LKDG…MLQE), and 326-353 (VSSLHAALEQERSKVKVLQAELAKYQGG).

The protein belongs to the GKAP1 family. Interacts with PRKG1 and IRS1.

It localises to the golgi apparatus. Functionally, regulates insulin-dependent IRS1 tyrosine phosphorylation in adipocytes by modulating the availability of IRS1 to IR tyrosine kinase. Its association with IRS1 is required for insulin-induced translocation of SLC2A4 to the cell membrane. Involved in TNF-induced impairment of insulin-dependent IRS1 tyrosine phosphorylation. The polypeptide is G kinase-anchoring protein 1 (Gkap1) (Rattus norvegicus (Rat)).